Here is a 645-residue protein sequence, read N- to C-terminus: ATP-dependent zinc metalloprotease FtsH 3 (645 aa).

Residues 1 to 11 (MQNKRNQSRVL) are Cytoplasmic-facing. The chain crosses the membrane as a helical span at residues 12–32 (WLLLIYITIGIFIYVGVNSLI). At 33 to 110 (GTPDVSKIEY…YVRSLENSWW (78 aa)) the chain is on the periplasmic side. The chain crosses the membrane as a helical span at residues 111–131 (ISILTFLLPVFLLIFLFTFLF). At 132–645 (RSSGGGANQG…ENNLIERKGI (514 aa)) the chain is on the cytoplasmic side. ATP is bound at residue 202–209 (GEPGTGKT). H424 is a Zn(2+) binding site. The active site involves E425. Zn(2+) contacts are provided by H428 and D501.

This sequence in the central section; belongs to the AAA ATPase family. It in the C-terminal section; belongs to the peptidase M41 family. As to quaternary structure, homohexamer. It depends on Zn(2+) as a cofactor.

Its subcellular location is the cell inner membrane. In terms of biological role, acts as a processive, ATP-dependent zinc metallopeptidase for both cytoplasmic and membrane proteins. Plays a role in the quality control of integral membrane proteins. This is ATP-dependent zinc metalloprotease FtsH 3 from Petrotoga mobilis (strain DSM 10674 / SJ95).